The sequence spans 104 residues: UPF0125 protein PSPTO_4512 (104 aa).

Belongs to the UPF0125 (RnfH) family.

The sequence is that of UPF0125 protein PSPTO_4512 from Pseudomonas syringae pv. tomato (strain ATCC BAA-871 / DC3000).